A 758-amino-acid polypeptide reads, in one-letter code: MQERLRILDQLLPELNVLLRLLDHEFLSATTREKQSAVCSILRQLQPAPGDELDFQYMNTAAYHNGTSFVESLFEEFDCDLHDLHDMQDEYRDSSENLSCQLPPPPSAPPPPLPTTPPPEDYYEEAVPLGPGKFTEYITSRNSSSPPNSIEDGYYEEADNNYPMTRINGEQKNSYNESDGLSSSYESYDEEDEEGKAQRLMLQWPSQEASLHLVRDSRICAFLLRKKRFGQWAKQLTLIKDNKLLCYKSSKDRQPHLEIPLALCNVAYVPKDGRRKKHELRFSLPNGEMLVLAVQSREQAEEWLRVIKEVISPSTGSSPASPALRHRLDLDKRLSHDKTSDSDSAANGENSSLSSGKENRDTGKCRKGGLAELKGSMSRAAGKKITRIISFSKKKQSTEEHHTSSTEEEVPCCGYLSVLVNQCWKERWCCLKGHTLYFHKDRNDLRTHINAIALRGCEVSPGFGPLHPFAFRILRQSQEVTALEASCSEEMGRWLGLLLAQTGSKTKPEALHYDYVDVETIANIATAVRHSFLWATSSHSSTSDLRLYDDVSYEKVEDPKRAPGVAQVKRHASSCSEKSRRVESEVKVKRHASNANQYKYGKTRAEEDARKFIVEKEKLEKEKEAIRSKLIAMKRERRELKEMLKNCSGKQQKEMEERLAMLEEQCKNNEKVRVDLEIQLTEVKENLKKSLAGGPTLGLAVTGKSENPPQKSQQPRSPPDRLLPVNSAAEMRRRSPSIAASSKGKVLQKAKEWEKKKP.

The interval 91–194 (YRDSSENLSC…YESYDEEDEE (104 aa)) is disordered. Residues 102 to 120 (LPPPPSAPPPPLPTTPPPE) show a composition bias toward pro residues. Positions 137–148 (YITSRNSSSPPN) are enriched in polar residues. Residues 177 to 186 (ESDGLSSSYE) show a composition bias toward low complexity. Positions 216 to 312 (DSRICAFLLR…WLRVIKEVIS (97 aa)) constitute a PH 1 domain. A disordered region spans residues 335 to 369 (SHDKTSDSDSAANGENSSLSSGKENRDTGKCRKGG). Positions 342 to 356 (SDSAANGENSSLSSG) are enriched in polar residues. Residues 409-503 (EVPCCGYLSV…WLGLLLAQTG (95 aa)) form the PH 2 domain. Residues 602-690 (KTRAEEDARK…TEVKENLKKS (89 aa)) adopt a coiled-coil conformation. Residues 692-758 (AGGPTLGLAV…KAKEWEKKKP (67 aa)) form a disordered region. Basic and acidic residues predominate over residues 749-758 (KAKEWEKKKP).

It is found in the cytoplasm. Its subcellular location is the cell projection. The protein localises to the podosome. The protein resides in the invadopodium. It localises to the cytoskeleton. It is found in the stress fiber. In terms of biological role, may be involved in podosome and invadosome formation. The polypeptide is Actin filament-associated protein 1-like 1 (afap1l1) (Xenopus tropicalis (Western clawed frog)).